Here is a 449-residue protein sequence, read N- to C-terminus: MSNVIENLGKLDRKVTLAIPKAEVQKETQERLARLSKTVKMSGFRPGKVPMKMVEKQYGQQVEFEVRFDKAARKFFDITQAQEVKVAGQPKFDIKTEGVADDELAFEATFEVYPEVKIGDLASAEVTRTKTEIGDAEIDKTVDILRKQRVHFHARGDAGAHGDGGADVAAQNGDRVTLDFVGKIDGVEFAGGKAEDFVYVLGEGRMLPEFETATLGLKVGESKSFPLTFPADYHGKEVAGKTAEFTVTLKKVEWAHLPEVDDAFAKSLGIADGSVEKMRADIRENLEREVKRRTHSMLKDQVMEALLKVSELDVPKALVEQDQERLVEMARRDLEQRGMPNAKDMPIPAEMFTQQAERRVKLGLILAEIVKANGLEAKPDQIKAEIEDFAKSYEDPKEVMRWYYGDQQRLAEMEAYVLENNVVNFVCDKAKVADKTVSFEELTAAPAQA.

The 86-residue stretch at 173–258 folds into the PPIase FKBP-type domain; sequence GDRVTLDFVG…LKKVEWAHLP (86 aa).

This sequence belongs to the FKBP-type PPIase family. Tig subfamily.

Its subcellular location is the cytoplasm. It catalyses the reaction [protein]-peptidylproline (omega=180) = [protein]-peptidylproline (omega=0). Its function is as follows. Involved in protein export. Acts as a chaperone by maintaining the newly synthesized protein in an open conformation. Functions as a peptidyl-prolyl cis-trans isomerase. This is Trigger factor from Cupriavidus metallidurans (strain ATCC 43123 / DSM 2839 / NBRC 102507 / CH34) (Ralstonia metallidurans).